Reading from the N-terminus, the 530-residue chain is Bifunctional purine biosynthesis protein PurH (530 aa).

The MGS-like domain occupies 1–148; it reads MNNARPIRRA…KNHKDVTIVV (148 aa).

The protein belongs to the PurH family.

It catalyses the reaction (6R)-10-formyltetrahydrofolate + 5-amino-1-(5-phospho-beta-D-ribosyl)imidazole-4-carboxamide = 5-formamido-1-(5-phospho-D-ribosyl)imidazole-4-carboxamide + (6S)-5,6,7,8-tetrahydrofolate. It carries out the reaction IMP + H2O = 5-formamido-1-(5-phospho-D-ribosyl)imidazole-4-carboxamide. The protein operates within purine metabolism; IMP biosynthesis via de novo pathway; 5-formamido-1-(5-phospho-D-ribosyl)imidazole-4-carboxamide from 5-amino-1-(5-phospho-D-ribosyl)imidazole-4-carboxamide (10-formyl THF route): step 1/1. Its pathway is purine metabolism; IMP biosynthesis via de novo pathway; IMP from 5-formamido-1-(5-phospho-D-ribosyl)imidazole-4-carboxamide: step 1/1. The protein is Bifunctional purine biosynthesis protein PurH of Vibrio atlanticus (strain LGP32) (Vibrio splendidus (strain Mel32)).